The primary structure comprises 642 residues: Putative ankyrin repeat protein L91 (642 aa).

ANK repeat units lie at residues 42–76 (HFTK…VKNP), 85–118 (EGWT…NPNI), 153–186 (NGFT…NVDS), 190–224 (NGET…TLHK), 227–256 (NGFT…DVNA), 260–288 (EGKS…EINH), 292–322 (NDIN…NPNE), 326–360 (NKNA…NPNI), 365–397 (SRTI…NVNA), 401–434 (EGRT…NVNH), 438–470 (DGAH…DVNI), 475–514 (KKWT…NVNA), 518–550 (YGNN…NVNH), and 554–587 (NGDT…NPNI).

The sequence is that of Putative ankyrin repeat protein L91 from Acanthamoeba polyphaga (Amoeba).